Consider the following 561-residue polypeptide: TBC1 domain family member 24 (561 aa).

Positions 36 and 40 each coordinate a 1,2-diacyl-sn-glycero-3-phospho-(1D-myo-inositol). The Rab-GAP TBC domain maps to 45–236 (AQSHTLRGKV…RVFDVFLVEG (192 aa)). Residues lysine 238, arginine 242, and 293–297 (RLFSR) each bind a 1,2-diacyl-sn-glycero-3-phospho-(1D-myo-inositol). Residues 343 to 556 (EIVSVKEMRD…IAAVEAWGFQ (214 aa)) enclose the TLDc domain. 2 positions are modified to phosphoserine: serine 475 and serine 482.

As to quaternary structure, interacts with ARF6. As to expression, expressed in brain, particularly at the level of the cortex and the hippocampus. Expressed in the inner ear in spiral ganglion cells, a collection of neurons critical for hearing and balance.

Its subcellular location is the cell membrane. It localises to the cytoplasm. It is found in the cytoplasmic vesicle membrane. The protein localises to the presynapse. Functionally, may act as a GTPase-activating protein for Rab family protein(s). Involved in neuronal projections development, probably through a negative modulation of ARF6 function. Involved in the regulation of synaptic vesicle trafficking. This Mus musculus (Mouse) protein is TBC1 domain family member 24 (Tbc1d24).